We begin with the raw amino-acid sequence, 407 residues long: Actinorhodin polyketide putative beta-ketoacyl synthase 2 (407 aa).

Residues 1-402 (MSVLITGVGV…GFNSAAVLRR (402 aa)) enclose the Ketosynthase family 3 (KS3) domain.

This sequence belongs to the thiolase-like superfamily. Beta-ketoacyl-ACP synthases family.

The sequence is that of Actinorhodin polyketide putative beta-ketoacyl synthase 2 from Streptomyces coelicolor (strain ATCC BAA-471 / A3(2) / M145).